The primary structure comprises 334 residues: 4-hydroxyproline 2-epimerase (334 aa).

The Proton acceptor role is filled by Cys91. Substrate is bound by residues 92–93 (GH), His224, and Asp250. Cys254 acts as the Proton donor in catalysis. Residue 255–256 (GT) participates in substrate binding.

The protein belongs to the proline racemase family.

It carries out the reaction trans-4-hydroxy-L-proline = cis-4-hydroxy-D-proline. In terms of biological role, catalyzes the epimerization of trans-4-hydroxy-L-proline (t4LHyp) to cis-4-hydroxy-D-proline (c4DHyp). Is likely involved in a degradation pathway that converts t4LHyp to alpha-ketoglutarate. Displays no proline racemase activity. This is 4-hydroxyproline 2-epimerase from Spirosoma linguale (strain ATCC 33905 / DSM 74 / LMG 10896 / Claus 1).